A 205-amino-acid chain; its full sequence is uncharacterized protein (205 aa).

A coiled-coil region spans residues 10 to 75 (QDLLSAVDQQ…AANLMTVMTD (66 aa)). Residues 108–141 (MPLPSSNTNNDQTSPPASGKTSETPKKNPTNAMF) are disordered. Over residues 111 to 141 (PSSNTNNDQTSPPASGKTSETPKKNPTNAMF) the composition is skewed to polar residues.

Belongs to the asfivirus K205R family.

It is found in the host cytoplasm. Induces host endoplasmic reticulum stress and consequently activates autophagy and NF-kappa-B signaling pathway. In turn, may induce autophagy-mediated STING1 degradation and innate immune evasion. This is an uncharacterized protein from Ornithodoros (relapsing fever ticks).